Consider the following 56-residue polypeptide: Keratin-associated protein 20-1 (56 aa).

Belongs to the KRTAP type 20 family. Interacts with hair keratins.

Its function is as follows. In the hair cortex, hair keratin intermediate filaments are embedded in an interfilamentous matrix, consisting of hair keratin-associated proteins (KRTAP), which are essential for the formation of a rigid and resistant hair shaft through their extensive disulfide bond cross-linking with abundant cysteine residues of hair keratins. The matrix proteins include the high-sulfur and high-glycine-tyrosine keratins. The polypeptide is Keratin-associated protein 20-1 (KRTAP20-1) (Homo sapiens (Human)).